The primary structure comprises 122 residues: MSITKDQILEAFAAMSVMDVVELIEAMEEKFGVSAAAATVAVGGDAGAAAEEQTEFDVVMTSHGDNKVAVIKAVRGATGLGLKEAKTMAESSPIAIKEGVSKEEAEALKKDLEAAGAVVEIK.

It belongs to the bacterial ribosomal protein bL12 family. In terms of assembly, homodimer. Part of the ribosomal stalk of the 50S ribosomal subunit. Forms a multimeric L10(L12)X complex, where L10 forms an elongated spine to which 2 to 4 L12 dimers bind in a sequential fashion. Binds GTP-bound translation factors.

In terms of biological role, forms part of the ribosomal stalk which helps the ribosome interact with GTP-bound translation factors. Is thus essential for accurate translation. The chain is Large ribosomal subunit protein bL12 from Shewanella denitrificans (strain OS217 / ATCC BAA-1090 / DSM 15013).